Consider the following 1005-residue polypeptide: DNA-directed RNA polymerase subunit beta (1005 aa).

This sequence belongs to the RNA polymerase beta chain family. In terms of assembly, in plastids the minimal PEP RNA polymerase catalytic core is composed of four subunits: alpha, beta, beta', and beta''. When a (nuclear-encoded) sigma factor is associated with the core the holoenzyme is formed, which can initiate transcription (Potential).

It is found in the plastid. Its subcellular location is the apicoplast. The catalysed reaction is RNA(n) + a ribonucleoside 5'-triphosphate = RNA(n+1) + diphosphate. In terms of biological role, DNA-dependent RNA polymerase catalyzes the transcription of DNA into RNA using the four ribonucleoside triphosphates as substrates. The protein is DNA-directed RNA polymerase subunit beta (rpoB) of Theileria parva (East coast fever infection agent).